Here is a 380-residue protein sequence, read N- to C-terminus: Cytochrome b (380 aa).

Transmembrane regions (helical) follow at residues 34 to 54 (FGSL…LLAM), 78 to 99 (WLIR…FLHI), 114 to 134 (WNTG…GYVL), and 179 to 199 (FFAL…THLM). Heme b is bound by residues His-84 and His-98. Residues His-183 and His-197 each coordinate heme b. His-202 contributes to the a ubiquinone binding site. Transmembrane regions (helical) follow at residues 227–247 (LKDI…ALFS), 289–309 (LGGV…PFLH), 321–341 (LSQA…WVGS), and 348–368 (FIII…SLLP).

This sequence belongs to the cytochrome b family. The cytochrome bc1 complex contains 11 subunits: 3 respiratory subunits (MT-CYB, CYC1 and UQCRFS1), 2 core proteins (UQCRC1 and UQCRC2) and 6 low-molecular weight proteins (UQCRH/QCR6, UQCRB/QCR7, UQCRQ/QCR8, UQCR10/QCR9, UQCR11/QCR10 and a cleavage product of UQCRFS1). This cytochrome bc1 complex then forms a dimer. The cofactor is heme b.

The protein resides in the mitochondrion inner membrane. Component of the ubiquinol-cytochrome c reductase complex (complex III or cytochrome b-c1 complex) that is part of the mitochondrial respiratory chain. The b-c1 complex mediates electron transfer from ubiquinol to cytochrome c. Contributes to the generation of a proton gradient across the mitochondrial membrane that is then used for ATP synthesis. The polypeptide is Cytochrome b (MT-CYB) (Crossoptilon crossoptilon (White-eared pheasant)).